We begin with the raw amino-acid sequence, 518 residues long: Chromosomal replication initiator protein DnaA (518 aa).

Positions 1–72 are domain I, interacts with DnaA modulators; it reads MTLAEFWPLC…VREELAAGRS (72 aa). Residues 72–180 form a domain II region; the sequence is SAFVFKPGEG…DAEEARYEQT (109 aa). The domain III, AAA+ region stretch occupies residues 181 to 397; sequence NLSPDYTFDT…GAFNRVGASS (217 aa). ATP is bound by residues glycine 225, glycine 227, lysine 228, and threonine 229. Positions 398 to 518 are domain IV, binds dsDNA; that stretch reads RFMNRPVIDI…YEKLLILIQN (121 aa).

This sequence belongs to the DnaA family. Oligomerizes as a right-handed, spiral filament on DNA at oriC.

The protein localises to the cytoplasm. Functionally, plays an essential role in the initiation and regulation of chromosomal replication. ATP-DnaA binds to the origin of replication (oriC) to initiate formation of the DNA replication initiation complex once per cell cycle. Binds the DnaA box (a 9 base pair repeat at the origin) and separates the double-stranded (ds)DNA. Forms a right-handed helical filament on oriC DNA; dsDNA binds to the exterior of the filament while single-stranded (ss)DNA is stabiized in the filament's interior. The ATP-DnaA-oriC complex binds and stabilizes one strand of the AT-rich DNA unwinding element (DUE), permitting loading of DNA polymerase. After initiation quickly degrades to an ADP-DnaA complex that is not apt for DNA replication. Binds acidic phospholipids. This is Chromosomal replication initiator protein DnaA from Neisseria meningitidis serogroup C / serotype 2a (strain ATCC 700532 / DSM 15464 / FAM18).